Reading from the N-terminus, the 60-residue chain is MSKLKITQIKSGIATKPNHRETLRSLGLKRIGDTVIKEDRPEFRGMVRTVRHLVTMEEVD.

Belongs to the universal ribosomal protein uL30 family. As to quaternary structure, part of the 50S ribosomal subunit.

The chain is Large ribosomal subunit protein uL30 from Cutibacterium acnes (strain DSM 16379 / KPA171202) (Propionibacterium acnes).